Here is a 461-residue protein sequence, read N- to C-terminus: Diaboline synthase (461 aa).

Active-site proton acceptor residues include His185 and Asp400.

It belongs to the plant acyltransferase family. In terms of assembly, monomer.

The protein resides in the cytoplasm. The catalysed reaction is 17,18-epoxy-17-hydroxycur-19-ene + acetyl-CoA = diaboline + CoA. Its pathway is alkaloid biosynthesis. Its function is as follows. Acetyltransferase involved in the biosynthesis of curare monoterpene indole alkaloids (MIAs), natural products such as diaboline, a pharmacologically active compound used to regulate blood pressure. Curare alkaloids act as animal glycine receptor antagonists. Catalyzes the conversion of 17,18-epoxy-17-hydroxycur-19-ene (Wieland-Gumlich aldehyde) to diaboline. This chain is Diaboline synthase, found in Strychnos sp.